A 94-amino-acid chain; its full sequence is Large ribosomal subunit protein eL31 (94 aa).

The protein belongs to the eukaryotic ribosomal protein eL31 family.

The chain is Large ribosomal subunit protein eL31 (rpl31e) from Pyrococcus abyssi (strain GE5 / Orsay).